A 345-amino-acid polypeptide reads, in one-letter code: Protein TRIGALACTOSYLDIACYLGLYCEROL 3, chloroplastic (345 aa).

A chloroplast-targeting transit peptide spans 1–46 (MLSLSCSSSSSSLLPPSLHYHGSSSVQSIVVPRRSLISFRRKVSCC). The 252-residue stretch at 85–336 (IECRDVYKSF…TNPIVQQFAT (252 aa)) folds into the ABC transporter domain. ATP is bound at residue 117 to 124 (GPSGTGKS).

This sequence belongs to the ABC transporter superfamily. ABCI family. As to quaternary structure, catalytic subunit of the TGD complex, a lipid translocator at the inner chloroplast envelope membrane made of TGD1, TGD2 and TGD3. Interacts with TGD1 and TGD2 with an overall subunit stoichiometry of 2 TGD1, 2 TGD3 and 8 to 12 TGD2. Interacts with TGD5.

It is found in the plastid. The protein resides in the chloroplast stroma. Functionally, ATPase transporter involved in lipid transfer from the endoplasmic reticulum (ER) to plastids, and necessary for thylakoids formation. Not involved in transition metal transport pathways. The polypeptide is Protein TRIGALACTOSYLDIACYLGLYCEROL 3, chloroplastic (Arabidopsis thaliana (Mouse-ear cress)).